Here is a 147-residue protein sequence, read N- to C-terminus: Hemoglobin subunit beta-1 (147 aa).

Positions 3 to 147 constitute a Globin domain; the sequence is NLTAKERQLI…IADALGKGYH (145 aa). Heme b-binding residues include His-64 and His-93.

The protein belongs to the globin family. Heterotetramer of two alpha chains and two beta chains. In terms of tissue distribution, red blood cells.

Its function is as follows. Involved in oxygen transport from the lung to the various peripheral tissues. The chain is Hemoglobin subunit beta-1 (hbb1) from Xenopus tropicalis (Western clawed frog).